Consider the following 312-residue polypeptide: Glyoxylate/hydroxypyruvate reductase A (312 aa).

Residue Arg-227 is part of the active site. His-275 (proton donor) is an active-site residue.

The protein belongs to the D-isomer specific 2-hydroxyacid dehydrogenase family. GhrA subfamily.

The protein localises to the cytoplasm. The catalysed reaction is glycolate + NADP(+) = glyoxylate + NADPH + H(+). It carries out the reaction (R)-glycerate + NAD(+) = 3-hydroxypyruvate + NADH + H(+). The enzyme catalyses (R)-glycerate + NADP(+) = 3-hydroxypyruvate + NADPH + H(+). Functionally, catalyzes the NADPH-dependent reduction of glyoxylate and hydroxypyruvate into glycolate and glycerate, respectively. This is Glyoxylate/hydroxypyruvate reductase A from Escherichia coli O6:K15:H31 (strain 536 / UPEC).